The following is a 292-amino-acid chain: ATP synthase gamma chain (292 aa).

Belongs to the ATPase gamma chain family. As to quaternary structure, F-type ATPases have 2 components, CF(1) - the catalytic core - and CF(0) - the membrane proton channel. CF(1) has five subunits: alpha(3), beta(3), gamma(1), delta(1), epsilon(1). CF(0) has three main subunits: a, b and c.

The protein localises to the cell inner membrane. Produces ATP from ADP in the presence of a proton gradient across the membrane. The gamma chain is believed to be important in regulating ATPase activity and the flow of protons through the CF(0) complex. The sequence is that of ATP synthase gamma chain from Hyphomonas neptunium (strain ATCC 15444).